We begin with the raw amino-acid sequence, 136 residues long: Salivary protein 15 Iric-2 (136 aa).

An N-terminal signal peptide occupies residues 1–22 (MESFVAMKVVCIVLLFVIAAEA). An N-linked (GlcNAc...) asparagine glycan is attached at Asn-105. The interval 117 to 136 (GPKNQTCENKDQCVPHIPGC) is CD4-binding.

The protein belongs to the salp15 family. As to quaternary structure, interacts with host CD4. Interacts with host DC-SIGN (CD209). Interacts with Borrelia outer surface protein C (OspC). As to expression, expressed in salivary glands. Detected in fed adult female.

Its subcellular location is the secreted. Functionally, salivary tick protein that downregulates host immune system by binding to both dendritic cells, and CD4(+) T cells. Specifically binds to the CD4 coreceptor on T cells. This interaction prevents the activation of the Src kinase, Lck, and its downstream substrate Zap-70, and results in deficient activation of PLCgamma1, the repression of calcium fluxes triggered by T-cell antigen receptor (TCR) ligation, and a subsequent reduction in interleukin-2 production. This salivary protein also binds to DC-SIGN (CD209) on dendritic cells (DC) and activates the Raf-1 kinase/MEK signaling pathway that results in down-regulating expression of pro-inflammatory cytokines. Furthermore, it inhibits T cell proliferation induced by DCs. In addition, it inhibits in vitro keratinocyte inflammation induced by Borrelia burgdorferi or by the major outer surface protein (OspC) of Borrelia. In addition, it downregulates chemokines and monocyte chemoattractant protein 1, as well as several antimicrobial peptides such as defensins, cathelicidin, psoriasin, and RNase 7. Apart from its immunomodulatory activities, it is also associated with protection of Borrelia spirochetes from antibody-mediated killing through its binding to OspC. In vivo, tests on different immune disease animal models show promising therapeutic results, e.g., in inhibiting HIV infection, experimental autoimmune encephalomyelitis, transplantation rejection, and asthma. This is Salivary protein 15 Iric-2 from Ixodes ricinus (Common tick).